The sequence spans 108 residues: uncharacterized protein (108 aa).

This is an uncharacterized protein from Methanocaldococcus jannaschii (strain ATCC 43067 / DSM 2661 / JAL-1 / JCM 10045 / NBRC 100440) (Methanococcus jannaschii).